A 618-amino-acid polypeptide reads, in one-letter code: UvrABC system protein C (618 aa).

Residues 20–98 enclose the GIY-YIG domain; the sequence is TAPGVYRMYA…IKSLSPRYNV (79 aa). The UVR domain occupies 207-242; that stretch reads DQLGEEIMHSMQQASEALEFERAARLRDLLSSLRSM.

It belongs to the UvrC family. Interacts with UvrB in an incision complex.

It is found in the cytoplasm. The UvrABC repair system catalyzes the recognition and processing of DNA lesions. UvrC both incises the 5' and 3' sides of the lesion. The N-terminal half is responsible for the 3' incision and the C-terminal half is responsible for the 5' incision. This chain is UvrABC system protein C, found in Xanthomonas campestris pv. campestris (strain B100).